The primary structure comprises 30 residues: Photosystem I reaction center subunit XII (30 aa).

Residues 5–25 form a helical membrane-spanning segment; sequence SQIFFALCIALTAAVLAIGLG.

This sequence belongs to the PsaM family.

The protein localises to the plastid. The protein resides in the chloroplast thylakoid membrane. This is Photosystem I reaction center subunit XII from Emiliania huxleyi (Coccolithophore).